Consider the following 551-residue polypeptide: Transcription factor 7-like 1-B (551 aa).

The span at 1–11 (MPQLNSGGGDE) shows a compositional bias: gly residues. Residues 1 to 61 (MPQLNSGGGD…SENHSSDSDS (61 aa)) form an interaction with CTNNB1-A region. Disordered stretches follow at residues 1-77 (MPQL…EKPR), 183-213 (GTPPGHLSPEIDPKTGIPRPPHPSELSPYYP), 391-474 (WSAR…SLTT), and 492-515 (SPSSSSLSGHLPSPVGSPLLSRPI). 2 stretches are compositionally biased toward basic and acidic residues: residues 17-32 (ELIRFKDEGEQEEKSP) and 52-77 (SENHSSDSDSEVERRPPPRETFEKPR). The segment at 109–312 (LGGHYLPNGA…SPNLSTKSNV (204 aa)) is interaction with AES and TLE4-A. Residues 324–392 (IKKPLNAFML…LHSQLYPSWS (69 aa)) constitute a DNA-binding region (HMG box). Residues 407–416 (KQSPEMENYT) show a composition bias toward basic and acidic residues. The interval 408 to 551 (QSPEMENYTK…PLSLVTRSSD (144 aa)) is interaction with CTBP-B. Residues 445–464 (SPATPSAALASPAAPAATHS) are compositionally biased toward low complexity. Residues 465-474 (EQAQPLSLTT) show a composition bias toward polar residues.

Belongs to the TCF/LEF family. Interacts with csnk1e, ctnnb1-A, ctbp-B, dact1-A and gsk3b. May interact with ase and tle4-A. Interacts with tle1-B. Post-translationally, phosphorylated. Phosphorylation by csnk1e promotes binding to ctnnb1-A while phosphorylation by gsk3b may reverse this effect.

It localises to the nucleus. Its function is as follows. Participates in the Wnt signaling pathway. Binds to DNA and acts as a repressor in the absence of ctnnb1-A and possibly ctnnb1-B, and as an activator in the presence of these proteins. Required early in development for the establishment of the dorsal body axis in response to maternal Wnt signaling. This chain is Transcription factor 7-like 1-B (tcf7l1-b), found in Xenopus laevis (African clawed frog).